Reading from the N-terminus, the 1205-residue chain is Bromodomain and PHD finger-containing protein 3 (1205 aa).

Disordered stretches follow at residues 1-27 (MRKP…KCSP) and 75-121 (NSNK…SFRM). A Phosphoserine modification is found at Ser17. Over residues 75–84 (NSNKENSEQP) the composition is skewed to polar residues. Positions 89–99 (KSKKPSSKGKK) are enriched in basic residues. The PHD-type 1 zinc-finger motif lies at 212-262 (DAFCCVCLDDECHNSNVILFCDICNLAVHQECYGVPYIPEGQWLCRCCLQS). The C2HC pre-PHD-type zinc-finger motif lies at 266–299 (PVDCILCPNKGGAFKQTSDGHWAHVVCAIWIPEV). Residues 323–387 (LTCYICKQKG…RKTAYCEAHS (65 aa)) form a PHD-type 2 zinc finger. Residues 387–472 (SPPGAATARR…AGQDTPSTLP (86 aa)) are disordered. A phosphoserine mark is found at Ser400 and Ser403. The span at 417–432 (DGEEEEEEEVEEEEQE) shows a compositional bias: acidic residues. Basic residues predominate over residues 444 to 456 (VPKKSKMSLKQKI). An N6-acetyllysine mark is found at Lys447, Lys449, and Lys671. The Bromo domain occupies 589–693 (LELMPFNVLL…DLGGAILRHA (105 aa)). Phosphoserine is present on residues Ser713 and Ser740. A disordered region spans residues 779-897 (RQKLAQPPPP…LQLGNEPLQR (119 aa)). Over residues 817-827 (LQEEPEDDGDR) the composition is skewed to acidic residues. A compositionally biased stretch (low complexity) spans 839–851 (EPTGPAPSLSEQE). Position 900 is a phosphoserine (Ser900). Disordered regions lie at residues 907-926 (LSLM…VGRR) and 931-1015 (FKKA…SECS). Residues 942-955 (RSPDRVLENGEDHG) show a composition bias toward basic and acidic residues. Phosphoserine occurs at positions 962 and 965. Basic and acidic residues predominate over residues 980–991 (SCSESEGERSPQ). The region spanning 1076–1159 (PLELVWAKCR…RDKVLPLGVE (84 aa)) is the PWWP domain.

As to quaternary structure, component of some HBO1 complex composed of KAT7/HBO1, MEAF6, ING4 or ING5, and BRPF3. Component of the MOZ/MORF complex composed at least of ING5, KAT6A, KAT6B, MEAF6 and one of BRPF1, BRD1/BRPF2 and BRPF3. Interacts with KAT7/HBO1; the interaction is direct.

It is found in the nucleus. Its function is as follows. Scaffold subunit of various histone acetyltransferase (HAT) complexes, such as the MOZ/MORF and HBO1 complexes, which have a histone H3 acetyltransferase activity. Plays a role in DNA replication initiation by directing KAT7/HBO1 specificity towards histone H3 'Lys-14' acetylation (H3K14ac), thereby facilitating the activation of replication origins. Component of the MOZ/MORF complex which has a histone H3 acetyltransferase activity. This is Bromodomain and PHD finger-containing protein 3 from Homo sapiens (Human).